The primary structure comprises 32 residues: Cytochrome b6-f complex subunit 7 (32 aa).

The chain crosses the membrane as a helical span at residues 9–27 (AVLSSVLVLVGLAIGFLLL).

Belongs to the PetM family. The 4 large subunits of the cytochrome b6-f complex are cytochrome b6, subunit IV (17 kDa polypeptide, PetD), cytochrome f and the Rieske protein, while the 4 small subunits are PetG, PetL, PetM and PetN. The complex functions as a dimer.

It localises to the plastid. It is found in the chloroplast thylakoid membrane. Component of the cytochrome b6-f complex, which mediates electron transfer between photosystem II (PSII) and photosystem I (PSI), cyclic electron flow around PSI, and state transitions. In Pyropia yezoensis (Susabi-nori), this protein is Cytochrome b6-f complex subunit 7.